The following is a 691-amino-acid chain: Elongation factor G (691 aa).

A tr-type G domain is found at 8-282 (ERVRNIGIAA…AVVNYLPAPV (275 aa)). Residues 17–24 (AHIDAGKT), 81–85 (DTPGH), and 135–138 (NKMD) each bind GTP.

It belongs to the TRAFAC class translation factor GTPase superfamily. Classic translation factor GTPase family. EF-G/EF-2 subfamily.

Its subcellular location is the cytoplasm. Catalyzes the GTP-dependent ribosomal translocation step during translation elongation. During this step, the ribosome changes from the pre-translocational (PRE) to the post-translocational (POST) state as the newly formed A-site-bound peptidyl-tRNA and P-site-bound deacylated tRNA move to the P and E sites, respectively. Catalyzes the coordinated movement of the two tRNA molecules, the mRNA and conformational changes in the ribosome. This Prochlorococcus marinus (strain NATL1A) protein is Elongation factor G.